The chain runs to 435 residues: D-aminoacyl-tRNA deacylase (435 aa).

It belongs to the DtdA deacylase family. Monomer. Zn(2+) serves as cofactor.

It catalyses the reaction a D-aminoacyl-tRNA + H2O = a tRNA + a D-alpha-amino acid + H(+). The catalysed reaction is glycyl-tRNA(Ala) + H2O = tRNA(Ala) + glycine + H(+). Functionally, D-aminoacyl-tRNA deacylase with broad substrate specificity. By recycling D-aminoacyl-tRNA to D-amino acids and free tRNA molecules, this enzyme counteracts the toxicity associated with the formation of D-aminoacyl-tRNA entities in vivo. The sequence is that of D-aminoacyl-tRNA deacylase from Methanosphaerula palustris (strain ATCC BAA-1556 / DSM 19958 / E1-9c).